The following is a 985-amino-acid chain: SWI/SNF complex subunit SWI3D (985 aa).

The disordered stretch occupies residues 1-55 (MEEKRRDSAGTLAFAGSSGDSPASEPMPAPRRRGGGLKRKANALGGSNFFSSAPS). Positions 30-41 (PRRRGGGLKRKA) are enriched in basic residues. Positions 108-133 (EKPKEEEERNKAIREWEALEAKIEAD) form a coiled coil. One can recognise an SWIRM domain in the interval 145–242 (HVVPNHCGWF…FHPFPPTDTG (98 aa)). Residues 305-359 (AVEYHCNSCSADCSRKRYHCPKQADFDLCTECFNSGKFSSDMSSSDFILMEPAEA) form a ZZ-type; degenerate zinc finger. Residues Cys310, Cys313, Cys333, and Cys336 each coordinate Zn(2+). The SANT domain occupies 362 to 413 (VGSGKWTDQETLLLLEALEIFKENWNEIAEHVATKTKAQCMLHFLQMPIEDA). 3 stretches are compositionally biased toward basic and acidic residues: residues 428-464 (TTDL…KEVP), 493-502 (AEQKTPKLET), and 615-661 (DNSH…EKQP). Disordered stretches follow at residues 428–502 (TTDL…KLET) and 591–814 (EDPP…EGKK). The span at 662 to 671 (GSRTENSTTK) shows a compositional bias: polar residues. Basic and acidic residues predominate over residues 703–724 (CSGKELQEPLKDGNKLSSENKD). Positions 725 to 736 (ASQSTVSQSAAD) are enriched in polar residues. A compositionally biased stretch (basic and acidic residues) spans 742–776 (ASRDVEMKDTLQSEKDPEDVVKTVGEKVQLAKEEG). Positions 780–800 (VLSTPDKSVSQQPIGSASAPE) are enriched in polar residues. Residues 839-900 (ISAAAVKAKN…EQLERSRQRL (62 aa)) adopt a coiled-coil conformation. Residues 944–985 (MAFPRPPMPRPPGFPVPGSFVAATTMTGSSDPSPGSDNVSSV) are disordered. Pro residues predominate over residues 947 to 958 (PRPPMPRPPGFP). A compositionally biased stretch (polar residues) spans 965–985 (AATTMTGSSDPSPGSDNVSSV).

In terms of assembly, interacts with SWI3B, but not with BSH. Component of a RNA-directed DNA methylation (RdDM) complex that contains at least MORC6, MORC1/CRT1, MORC2, SWI3D and SUVH9. Interacts with MORC6 and SUVH9. As to expression, ubiquitously expressed.

The protein localises to the nucleus. Functionally, component of a multiprotein complex equivalent of the SWI/SNF complex, an ATP-dependent chromatin-remodeling complex, which is required for the positive and negative regulation of gene expression of a large number of genes. It changes chromatin structure by altering DNA-histone contacts within a nucleosome, leading eventually to a change in nucleosome position, thus facilitating or repressing binding of gene-specific transcription factors. The polypeptide is SWI/SNF complex subunit SWI3D (SWI3D) (Arabidopsis thaliana (Mouse-ear cress)).